The primary structure comprises 122 residues: uncharacterized protein (122 aa).

A signal peptide spans 1–33 (MASTVAGLSMSAESLRLPLLIGVSSGMLSVSDA).

This is an uncharacterized protein from Saccharomyces cerevisiae (strain ATCC 204508 / S288c) (Baker's yeast).